The sequence spans 378 residues: Alginate lyase (378 aa).

Positions M1–A28 are cleaved as a signal peptide. Residues S67–K68, H140–T141, and Y258 contribute to the substrate site. Residues L359–S378 form a disordered region. Positions D364–S378 are enriched in basic and acidic residues.

It belongs to the polysaccharide lyase 5 family.

The protein localises to the periplasm. It catalyses the reaction Eliminative cleavage of alginate to give oligosaccharides with 4-deoxy-alpha-L-erythro-hex-4-enuronosyl groups at their non-reducing ends and beta-D-mannuronate at their reducing end.. Catalyzes the depolymerization of alginate by cleaving the beta-1,4 glycosidic bond between two adjacent sugar residues via a beta-elimination mechanism. May serve to degrade mislocalized alginate that is trapped in the periplasmic space. The sequence is that of Alginate lyase from Pseudomonas syringae pv. syringae (strain B728a).